Reading from the N-terminus, the 204-residue chain is MVTIIAGIILSGGKGERIGGKKPFRVFNGKYLINYPSDILKSLNIPFVTVFAKNSIDLEMEKEYLTKYKCLISFDLIEGKGPLMGILCGMRVLNAKWFVVLPCDCPYINKEALKKLISNISIAEKNNNLCIIPKHENGYIEPLFALYKRDALSILNKIIMEDKNLSIRYFISYLNPLYIKAEELDESKRIFKNINTIEELMDNE.

GTP is bound by residues 10–12, Lys22, Asp75, and Asp104; that span reads LSG. Position 104 (Asp104) interacts with Mg(2+).

Belongs to the MobA family. Requires Mg(2+) as cofactor.

It is found in the cytoplasm. The enzyme catalyses Mo-molybdopterin + GTP + H(+) = Mo-molybdopterin guanine dinucleotide + diphosphate. In terms of biological role, transfers a GMP moiety from GTP to Mo-molybdopterin (Mo-MPT) cofactor (Moco or molybdenum cofactor) to form Mo-molybdopterin guanine dinucleotide (Mo-MGD) cofactor. This Methanocaldococcus jannaschii (strain ATCC 43067 / DSM 2661 / JAL-1 / JCM 10045 / NBRC 100440) (Methanococcus jannaschii) protein is Probable molybdenum cofactor guanylyltransferase.